The following is a 419-amino-acid chain: Peptide chain release factor subunit 1 (419 aa).

Belongs to the eukaryotic release factor 1 family. As to quaternary structure, heterodimer of two subunits, one of which binds GTP.

It localises to the cytoplasm. Functionally, directs the termination of nascent peptide synthesis (translation) in response to the termination codons UAA, UAG and UGA. This chain is Peptide chain release factor subunit 1, found in Methanococcus maripaludis (strain C7 / ATCC BAA-1331).